The primary structure comprises 571 residues: Hemagglutinin-neuraminidase (571 aa).

Over 1-26 (MDRAVNRVVLENEEREAKNTWRLVFR) the chain is Intravirion. The chain crosses the membrane as a helical span at residues 27–47 (IAVLLLMVMTLAISAAALVYS). Residues 48 to 571 (MGASTPRDLA…LVEILKDDRV (524 aa)) lie on the Virion surface side of the membrane. Asn119 carries an N-linked (GlcNAc...) asparagine; by host glycan. The tract at residues 124–152 (GEPVHDPDYIGGIGKELIVDDISDVTSFY) is important for interaction with fusion/F protein. Cystine bridges form between Cys172-Cys196, Cys186-Cys247, and Cys238-Cys251. An involved in neuraminidase activity region spans residues 234–239 (NRKSCS). N-linked (GlcNAc...) asparagine; by host glycosylation is found at Asn341 and Asn433. 2 cysteine pairs are disulfide-bonded: Cys344/Cys461 and Cys455/Cys465. Residues Asn481, Asn508, and Asn538 are each glycosylated (N-linked (GlcNAc...) asparagine; by host). Cys531 and Cys542 form a disulfide bridge.

This sequence belongs to the paramyxoviruses hemagglutinin-neuraminidase family. Homotetramer; composed of disulfide-linked homodimers. Interacts with F protein trimer. Interacts with host CG-1B; this interaction inhibits viral adsorption and replication rather than internalization.

Its subcellular location is the virion membrane. It localises to the host cell membrane. It catalyses the reaction Hydrolysis of alpha-(2-&gt;3)-, alpha-(2-&gt;6)-, alpha-(2-&gt;8)- glycosidic linkages of terminal sialic acid residues in oligosaccharides, glycoproteins, glycolipids, colominic acid and synthetic substrates.. Functionally, mediates the viral entry into the host cell together with fusion/F protein. Attaches the virus to sialic acid-containing cell receptors and thereby initiates infection. Binding of HN protein to the receptor induces a conformational change that allows the F protein to trigger virion/cell membranes fusion. Neuraminidase activity ensures the efficient spread of the virus by dissociating the mature virions from the neuraminic acid containing glycoproteins. In Gallus gallus (Chicken), this protein is Hemagglutinin-neuraminidase (HN).